The following is a 270-amino-acid chain: 4-hydroxy-tetrahydrodipicolinate reductase (270 aa).

NAD(+)-binding positions include 11–16 and Glu37; that span reads GAGGRM. Arg38 contacts NADP(+). Residues 101 to 103 and 125 to 128 each bind NAD(+); these read GTT and APNM. The active-site Proton donor/acceptor is the His158. His159 serves as a coordination point for (S)-2,3,4,5-tetrahydrodipicolinate. Residue Lys162 is the Proton donor of the active site. Residue 168–169 coordinates (S)-2,3,4,5-tetrahydrodipicolinate; the sequence is GT.

This sequence belongs to the DapB family.

It is found in the cytoplasm. It carries out the reaction (S)-2,3,4,5-tetrahydrodipicolinate + NAD(+) + H2O = (2S,4S)-4-hydroxy-2,3,4,5-tetrahydrodipicolinate + NADH + H(+). It catalyses the reaction (S)-2,3,4,5-tetrahydrodipicolinate + NADP(+) + H2O = (2S,4S)-4-hydroxy-2,3,4,5-tetrahydrodipicolinate + NADPH + H(+). It participates in amino-acid biosynthesis; L-lysine biosynthesis via DAP pathway; (S)-tetrahydrodipicolinate from L-aspartate: step 4/4. Its function is as follows. Catalyzes the conversion of 4-hydroxy-tetrahydrodipicolinate (HTPA) to tetrahydrodipicolinate. The sequence is that of 4-hydroxy-tetrahydrodipicolinate reductase from Shewanella oneidensis (strain ATCC 700550 / JCM 31522 / CIP 106686 / LMG 19005 / NCIMB 14063 / MR-1).